Consider the following 88-residue polypeptide: UPF0297 protein str1959 (88 aa).

It belongs to the UPF0297 family.

The protein is UPF0297 protein str1959 of Streptococcus thermophilus (strain CNRZ 1066).